A 1088-amino-acid polypeptide reads, in one-letter code: DNA-directed RNA polymerase subunit beta (1088 aa).

Belongs to the RNA polymerase beta chain family. As to quaternary structure, in plastids the minimal PEP RNA polymerase catalytic core is composed of four subunits: alpha, beta, beta', and beta''. When a (nuclear-encoded) sigma factor is associated with the core the holoenzyme is formed, which can initiate transcription.

It localises to the plastid. The protein resides in the chloroplast. The catalysed reaction is RNA(n) + a ribonucleoside 5'-triphosphate = RNA(n+1) + diphosphate. In terms of biological role, DNA-dependent RNA polymerase catalyzes the transcription of DNA into RNA using the four ribonucleoside triphosphates as substrates. This chain is DNA-directed RNA polymerase subunit beta, found in Ostreococcus tauri.